Consider the following 525-residue polypeptide: Peptide chain release factor 3 (525 aa).

A tr-type G domain is found at 11-279 (NKRRTFAIIS…TYLQFAPAPS (269 aa)). Residues 20–27 (SHPDAGKT), 88–92 (DTPGH), and 142–145 (NKFD) each bind GTP.

It belongs to the TRAFAC class translation factor GTPase superfamily. Classic translation factor GTPase family. PrfC subfamily.

It localises to the cytoplasm. Increases the formation of ribosomal termination complexes and stimulates activities of RF-1 and RF-2. It binds guanine nucleotides and has strong preference for UGA stop codons. It may interact directly with the ribosome. The stimulation of RF-1 and RF-2 is significantly reduced by GTP and GDP, but not by GMP. This is Peptide chain release factor 3 from Limosilactobacillus reuteri (strain DSM 20016) (Lactobacillus reuteri).